Consider the following 335-residue polypeptide: Oligopeptide transport ATP-binding protein OppD (335 aa).

Residues 18–267 form the ABC transporter domain; it reads LEVNDLRVTF…PVHPYSIGLL (250 aa). 54–61 contacts ATP; the sequence is GESGSGKS.

Belongs to the ABC transporter superfamily. As to quaternary structure, the complex is composed of two ATP-binding proteins (OppD and OppF), two transmembrane proteins (OppB and OppC) and a solute-binding protein (OppA).

Its subcellular location is the cell inner membrane. The enzyme catalyses a [peptide](out) + ATP + H2O = a [peptide](in) + ADP + phosphate + H(+). The catalysed reaction is L-alanyl-gamma-D-glutamyl-meso-2,6-diaminopimelate(out) + ATP + H2O = L-alanyl-gamma-D-glutamyl-meso-2,6-diaminopimelate(in) + ADP + phosphate + H(+). Functionally, part of the ABC transporter complex OppABCDF involved in the uptake of oligopeptides, including the cell wall murein tripeptide L-alanyl-gamma-D-glutamyl-meso-diaminopimelate. Responsible for energy coupling to the transport system. Plays an important nutritional role and is involved in the recycling of cell wall peptides. Binds ATP. The protein is Oligopeptide transport ATP-binding protein OppD of Salmonella typhimurium (strain LT2 / SGSC1412 / ATCC 700720).